A 347-amino-acid chain; its full sequence is 8-amino-8-demethylriboflavin N,N-dimethyltransferase (347 aa).

Residues aspartate 209 and 235 to 237 (GDF) each bind S-adenosyl-L-methionine.

It belongs to the class I-like SAM-binding methyltransferase superfamily. Cation-independent O-methyltransferase family. In terms of assembly, homodimer.

It carries out the reaction 8-amino-8-demethylriboflavin + 2 S-adenosyl-L-methionine = roseoflavin + 2 S-adenosyl-L-homocysteine + 2 H(+). It participates in antibiotic biosynthesis. Catalyzes the S-adenosyl methionine-dependent conversion of 8-amino-8-demethyl-D-riboflavin (AF) into 8-methylamino-8-demethyl-D-riboflavin (MAF) and roseoflavin (RoF), the last two steps in the biosynthesis of the antibiotic roseoflavin. The protein is 8-amino-8-demethylriboflavin N,N-dimethyltransferase of Streptomyces davaonensis (strain DSM 101723 / JCM 4913 / KCC S-0913 / 768).